The sequence spans 359 residues: Guanine nucleotide-binding protein subunit alpha-11 (359 aa).

S-palmitoyl cysteine attachment occurs at residues Cys-9 and Cys-10. In terms of domain architecture, G-alpha spans 38–359 (RELKLLLLGT…QLNLKEYNLV (322 aa)). The segment at 41–54 (KLLLLGTGESGKST) is G1 motif. Residues 46–53 (GTGESGKS) and 180–183 (LRVR) contribute to the GTP site. Ser-53 is a binding site for Mg(2+). The tract at residues 178 to 186 (DVLRVRVPT) is G2 motif. Thr-186 lines the Mg(2+) pocket. The segment at 201–210 (FRMVDVGGQR) is G3 motif. Gln-209 carries the deamidated glutamine; by Photorhabdus PAU_02230 modification. A G4 motif region spans residues 270-277 (ILFLNKKD). Residues 274–277 (NKKD) and Ala-331 contribute to the GTP site. Positions 329-334 (TCATDT) are G5 motif.

This sequence belongs to the G-alpha family. G(q) subfamily. As to quaternary structure, g proteins are composed of 3 units; alpha, beta and gamma. The alpha chain contains the guanine nucleotide binding site. Interacts with RGS22. Interacts with NTSR1. (Microbial infection) Interacts with human cytomegalovirus (HHV-5) US28. In terms of processing, (Microbial infection) Deamidated at Gln-209 by Photorhabdus asymbiotica toxin PAU_02230, blocking GTP hydrolysis of heterotrimeric GNAQ or GNA11 and G-alphai (GNAI1, GNAI2 or GNAI3) proteins, thereby activating RhoA. As to expression, expressed in testis.

The protein resides in the cell membrane. It localises to the cytoplasm. The enzyme catalyses GTP + H2O = GDP + phosphate + H(+). Its function is as follows. Guanine nucleotide-binding proteins (G proteins) function as transducers downstream of G protein-coupled receptors (GPCRs) in numerous signaling cascades. The alpha chain contains the guanine nucleotide binding site and alternates between an active, GTP-bound state and an inactive, GDP-bound state. Signaling by an activated GPCR promotes GDP release and GTP binding. The alpha subunit has a low GTPase activity that converts bound GTP to GDP, thereby terminating the signal. Both GDP release and GTP hydrolysis are modulated by numerous regulatory proteins. Signaling is mediated via phospholipase C-beta-dependent inositol lipid hydrolysis for signal propagation: activates phospholipase C-beta: following GPCR activation, GNA11 activates PLC-beta (PLCB1, PLCB2, PLCB3 or PLCB4), leading to production of diacylglycerol (DAG) and inositol 1,4,5-trisphosphate (IP3). Transduces FFAR4 signaling in response to long-chain fatty acids (LCFAs). Together with GNAQ, required for heart development. In the respiratory epithelium, transmits OXGR1-dependent signals that lead to downstream intracellular Ca(2+) release and mucocilliary clearance of airborne pathogens. The sequence is that of Guanine nucleotide-binding protein subunit alpha-11 (GNA11) from Homo sapiens (Human).